Here is a 281-residue protein sequence, read N- to C-terminus: MTDHRPSPEEEQTTANEERTVSNGRYLYCVVDTTSSESATLSTTGVDDNPVYVVEADGVGAVVHDCETVYETEDLEQVKRWLVTHQQVVDAASDAFGTPLPMRFDTVLEGGDASIERWLEDHYEGFRDELASFAGVWEYRINLLWDSAPFEETIADRDDRLRELRQRQQQSGAGKKFLLEKQSDQRLQELKRERRTELADQLKEAITPVVNDLTEQDTNTPLQDEHSSIEKEQIVRFAVLADEDDETALGDRLDTIVEHEGVEIRFTGPWPPYTFAPDIGK.

The protein belongs to the gas vesicle GvpF/GvpL family. As to quaternary structure, may form oligomers. GvpF to GvpM interact with each other in vitro, and may form multi-subunit complex(es). Interacts with GvpC1, GvpN1 and GvpO1.

Its subcellular location is the gas vesicle. The protein localises to the cytoplasm. In terms of biological role, proteins GvpF to GvpM might be involved in nucleating gas vesicle formation. A minor component of the gas vesicle. This the only minor gas vesicle protein that binds all the others (including GvpC1, GvpN1 and GvpO1, but not GvpA1), suggesting it might be able to assemble them. Gas vesicles are hollow, gas filled proteinaceous nanostructures found in several microbial planktonic microorganisms. They allow positioning of halobacteria at the optimal depth for growth in the poorly aerated, shallow brine pools of their habitat. Its function is as follows. Expression of a 9.5 kb p-vac DNA fragment containing 2 divergently transcribed regions (gvpD-gvpE-gvpF-gvpG-gvpH-gvpI-gvpJ-gvpK-gvpL-gvpM and gvpA-gvpC-gvpN-gvpO) allows H.volcanii to produce gas vesicles. A minimal gas vesicle can be made in H.volcanii by gvpA1-gvpO1 plus gvpF1-gvpG1-gvpJ1-gvpK1-gvpL1-gvpM1; lack of enough GvpJ1 prevents their formation. A similar region restores gas vesicle production in H.halobium without the p-vac locus, but it still has the c-vac locus. In Halobacterium salinarum (strain ATCC 700922 / JCM 11081 / NRC-1) (Halobacterium halobium), this protein is Gas vesicle protein L1 (gvpL11).